The chain runs to 433 residues: Phosphomethylpyrimidine synthase (433 aa).

Residues N69, M98, Y127, H163, 185 to 187, 226 to 229, and E265 each bind substrate; these read SRG and DACR. H269 serves as a coordination point for Zn(2+). Y292 is a substrate binding site. H333 provides a ligand contact to Zn(2+). 3 residues coordinate [4Fe-4S] cluster: C409, C412, and C416.

Belongs to the ThiC family. [4Fe-4S] cluster is required as a cofactor.

It carries out the reaction 5-amino-1-(5-phospho-beta-D-ribosyl)imidazole + S-adenosyl-L-methionine = 4-amino-2-methyl-5-(phosphooxymethyl)pyrimidine + CO + 5'-deoxyadenosine + formate + L-methionine + 3 H(+). It functions in the pathway cofactor biosynthesis; thiamine diphosphate biosynthesis. Its function is as follows. Catalyzes the synthesis of the hydroxymethylpyrimidine phosphate (HMP-P) moiety of thiamine from aminoimidazole ribotide (AIR) in a radical S-adenosyl-L-methionine (SAM)-dependent reaction. This Clostridioides difficile (strain 630) (Peptoclostridium difficile) protein is Phosphomethylpyrimidine synthase.